A 388-amino-acid polypeptide reads, in one-letter code: Succinate--CoA ligase [ADP-forming] subunit beta (388 aa).

The ATP-grasp domain occupies lysine 9–glutamine 244. Residues lysine 46, glycine 53 to glycine 55, glutamate 99, cysteine 102, and glutamate 107 contribute to the ATP site. Asparagine 199 and aspartate 213 together coordinate Mg(2+). Residues asparagine 264 and glycine 321–methionine 323 contribute to the substrate site.

It belongs to the succinate/malate CoA ligase beta subunit family. Heterotetramer of two alpha and two beta subunits. It depends on Mg(2+) as a cofactor.

The enzyme catalyses succinate + ATP + CoA = succinyl-CoA + ADP + phosphate. It carries out the reaction GTP + succinate + CoA = succinyl-CoA + GDP + phosphate. The protein operates within carbohydrate metabolism; tricarboxylic acid cycle; succinate from succinyl-CoA (ligase route): step 1/1. Functionally, succinyl-CoA synthetase functions in the citric acid cycle (TCA), coupling the hydrolysis of succinyl-CoA to the synthesis of either ATP or GTP and thus represents the only step of substrate-level phosphorylation in the TCA. The beta subunit provides nucleotide specificity of the enzyme and binds the substrate succinate, while the binding sites for coenzyme A and phosphate are found in the alpha subunit. The chain is Succinate--CoA ligase [ADP-forming] subunit beta from Anaeromyxobacter dehalogenans (strain 2CP-1 / ATCC BAA-258).